Reading from the N-terminus, the 155-residue chain is Large ribosomal subunit protein uL13 (155 aa).

It belongs to the universal ribosomal protein uL13 family. In terms of assembly, part of the 50S ribosomal subunit.

Functionally, this protein is one of the early assembly proteins of the 50S ribosomal subunit, although it is not seen to bind rRNA by itself. It is important during the early stages of 50S assembly. The polypeptide is Large ribosomal subunit protein uL13 (Rickettsia bellii (strain OSU 85-389)).